Reading from the N-terminus, the 507-residue chain is ATP synthase subunit alpha, chloroplastic (507 aa).

Residue 170-177 (GDRQTGKA) participates in ATP binding.

It belongs to the ATPase alpha/beta chains family. In terms of assembly, F-type ATPases have 2 components, CF(1) - the catalytic core - and CF(0) - the membrane proton channel. CF(1) has five subunits: alpha(3), beta(3), gamma(1), delta(1), epsilon(1). CF(0) has four main subunits: a, b, b' and c.

It localises to the plastid. Its subcellular location is the chloroplast thylakoid membrane. It catalyses the reaction ATP + H2O + 4 H(+)(in) = ADP + phosphate + 5 H(+)(out). Its function is as follows. Produces ATP from ADP in the presence of a proton gradient across the membrane. The alpha chain is a regulatory subunit. The chain is ATP synthase subunit alpha, chloroplastic from Calycanthus floridus var. glaucus (Eastern sweetshrub).